The following is a 325-amino-acid chain: Inactive S-adenosylmethionine decarboxylase prozyme (325 aa).

Belongs to the eukaryotic AdoMetDC family. As to quaternary structure, forms a heterodimer with S-adenosylmethionine decarboxylase AdoMetDC; heterodimerization is required to activate AdoMetDC.

The protein operates within amine and polyamine biosynthesis; S-adenosylmethioninamine biosynthesis; S-adenosylmethioninamine from S-adenosyl-L-methionine: step 1/1. Functionally, probably has no catalytic activity due to the loss of several residues required for processing and catalysis. Forms a complex with S-adenosylmethionine decarboxylase AdoMetDC which is essential to activate AdoMetDC. Required for the biosynthesis of the polyamine spermidine. Required for growth and survival during the bloodstream life cycle stage. This chain is Inactive S-adenosylmethionine decarboxylase prozyme, found in Trypanosoma brucei brucei.